The primary structure comprises 464 residues: Soluble pyridine nucleotide transhydrogenase (464 aa).

Aspartate 35–cysteine 44 serves as a coordination point for FAD.

The protein belongs to the class-I pyridine nucleotide-disulfide oxidoreductase family. FAD serves as cofactor.

It localises to the cytoplasm. It catalyses the reaction NAD(+) + NADPH = NADH + NADP(+). Functionally, conversion of NADPH, generated by peripheral catabolic pathways, to NADH, which can enter the respiratory chain for energy generation. The sequence is that of Soluble pyridine nucleotide transhydrogenase from Pseudomonas fluorescens (strain SBW25).